The following is a 578-amino-acid chain: Arginine--tRNA ligase (578 aa).

A 'HIGH' region motif is present at residues Pro-127–His-137.

This sequence belongs to the class-I aminoacyl-tRNA synthetase family. In terms of assembly, monomer.

It is found in the cytoplasm. It catalyses the reaction tRNA(Arg) + L-arginine + ATP = L-arginyl-tRNA(Arg) + AMP + diphosphate. This Pseudomonas fluorescens (strain Pf0-1) protein is Arginine--tRNA ligase.